The following is a 400-amino-acid chain: Argininosuccinate synthase (400 aa).

Residues 10-18 (AYSGGVDTS) and alanine 38 contribute to the ATP site. Position 89 (tyrosine 89) interacts with L-citrulline. An ATP-binding site is contributed by glycine 119. The L-aspartate site is built by threonine 121, asparagine 125, and aspartate 126. Asparagine 125 serves as a coordination point for L-citrulline. L-citrulline is bound by residues arginine 129, serine 177, serine 186, glutamate 262, and tyrosine 274.

Belongs to the argininosuccinate synthase family. Type 1 subfamily. In terms of assembly, homotetramer.

It is found in the cytoplasm. It carries out the reaction L-citrulline + L-aspartate + ATP = 2-(N(omega)-L-arginino)succinate + AMP + diphosphate + H(+). It participates in amino-acid biosynthesis; L-arginine biosynthesis; L-arginine from L-ornithine and carbamoyl phosphate: step 2/3. In Crocosphaera subtropica (strain ATCC 51142 / BH68) (Cyanothece sp. (strain ATCC 51142)), this protein is Argininosuccinate synthase.